A 159-amino-acid polypeptide reads, in one-letter code: Peptide methionine sulfoxide reductase MsrB (159 aa).

The MsrB domain maps to 14–137 (TEKLKENLTE…NSASLKFIAK (124 aa)). C126 acts as the Nucleophile in catalysis.

The protein belongs to the MsrB Met sulfoxide reductase family.

It catalyses the reaction L-methionyl-[protein] + [thioredoxin]-disulfide + H2O = L-methionyl-(R)-S-oxide-[protein] + [thioredoxin]-dithiol. This chain is Peptide methionine sulfoxide reductase MsrB, found in Hathewaya histolytica (Clostridium histolyticum).